The chain runs to 405 residues: S-adenosylmethionine synthase (405 aa).

141–146 (GQGSVD) lines the ATP pocket.

It belongs to the AdoMet synthase 2 family. The cofactor is Mg(2+).

The catalysed reaction is L-methionine + ATP + H2O = S-adenosyl-L-methionine + phosphate + diphosphate. It functions in the pathway amino-acid biosynthesis; S-adenosyl-L-methionine biosynthesis; S-adenosyl-L-methionine from L-methionine: step 1/1. Functionally, catalyzes the formation of S-adenosylmethionine from methionine and ATP. In Methanococcus maripaludis (strain C5 / ATCC BAA-1333), this protein is S-adenosylmethionine synthase.